Consider the following 143-residue polypeptide: Deoxyuridine 5'-triphosphate nucleotidohydrolase (143 aa).

Residues 63–65 (RSG), Asn-76, 80–82 (TID), and Lys-90 each bind substrate.

Belongs to the dUTPase family. Mg(2+) serves as cofactor.

The enzyme catalyses dUTP + H2O = dUMP + diphosphate + H(+). The protein operates within pyrimidine metabolism; dUMP biosynthesis; dUMP from dCTP (dUTP route): step 2/2. Functionally, this enzyme is involved in nucleotide metabolism: it produces dUMP, the immediate precursor of thymidine nucleotides and it decreases the intracellular concentration of dUTP so that uracil cannot be incorporated into DNA. This Clostridioides difficile (Peptoclostridium difficile) protein is Deoxyuridine 5'-triphosphate nucleotidohydrolase.